The following is a 492-amino-acid chain: Glutamyl-tRNA(Gln) amidotransferase subunit A (492 aa).

Active-site charge relay system residues include K78 and S158. The Acyl-ester intermediate role is filled by S182.

Belongs to the amidase family. GatA subfamily. In terms of assembly, heterotrimer of A, B and C subunits.

It carries out the reaction L-glutamyl-tRNA(Gln) + L-glutamine + ATP + H2O = L-glutaminyl-tRNA(Gln) + L-glutamate + ADP + phosphate + H(+). Functionally, allows the formation of correctly charged Gln-tRNA(Gln) through the transamidation of misacylated Glu-tRNA(Gln) in organisms which lack glutaminyl-tRNA synthetase. The reaction takes place in the presence of glutamine and ATP through an activated gamma-phospho-Glu-tRNA(Gln). This chain is Glutamyl-tRNA(Gln) amidotransferase subunit A, found in Zymomonas mobilis subsp. mobilis (strain ATCC 31821 / ZM4 / CP4).